The following is a 213-amino-acid chain: Small ribosomal subunit protein uS3 (213 aa).

The KH type-2 domain maps to 38-106; sequence IRSYIKKLLY…EFSLEVTEVR (69 aa).

It belongs to the universal ribosomal protein uS3 family. Part of the 30S ribosomal subunit. Forms a tight complex with proteins S10 and S14.

Functionally, binds the lower part of the 30S subunit head. Binds mRNA in the 70S ribosome, positioning it for translation. The sequence is that of Small ribosomal subunit protein uS3 from Lawsonia intracellularis (strain PHE/MN1-00).